Here is a 186-residue protein sequence, read N- to C-terminus: Signal peptidase I (186 aa).

Topologically, residues 1–19 (MTEEKSTNKKNSLFEWVKA) are cytoplasmic. The helical transmembrane segment at 20-40 (IIIAVVLALLIRAFLFEPYLV) threads the bilayer. Topologically, residues 41 to 186 (EGTSMDPTLH…FPFNEIRKTD (146 aa)) are extracellular. Active-site residues include S44 and K86.

Belongs to the peptidase S26 family.

It localises to the cell membrane. The catalysed reaction is Cleavage of hydrophobic, N-terminal signal or leader sequences from secreted and periplasmic proteins.. The protein is Signal peptidase I (lepB) of Bacillus licheniformis.